We begin with the raw amino-acid sequence, 980 residues long: Chitin binding domain containing chtb-2 (980 aa).

Residues 1-20 (MRTMHCFLFILLFCLGQVFT) form the signal peptide. N-linked (GlcNAc...) asparagine glycans are attached at residues asparagine 187 and asparagine 190. 3 disordered regions span residues 310-354 (ERQQ…AELD), 431-451 (QEEE…QIRQ), and 486-512 (EILR…QQEA). N-linked (GlcNAc...) asparagine glycans are attached at residues asparagine 941 and asparagine 975.

The polypeptide is Chitin binding domain containing chtb-2 (Caenorhabditis elegans).